Reading from the N-terminus, the 283-residue chain is Diaminopimelate epimerase (283 aa).

Residues Asn-14, Gln-47, and Asn-67 each coordinate substrate. The active-site Proton donor is the Cys-76. Residues 77–78 (GN), Asn-164, Asn-197, and 215–216 (ER) each bind substrate. Catalysis depends on Cys-224, which acts as the Proton acceptor. 225 to 226 (GT) contributes to the substrate binding site.

The protein belongs to the diaminopimelate epimerase family. In terms of assembly, homodimer.

Its subcellular location is the cytoplasm. It carries out the reaction (2S,6S)-2,6-diaminopimelate = meso-2,6-diaminopimelate. Its pathway is amino-acid biosynthesis; L-lysine biosynthesis via DAP pathway; DL-2,6-diaminopimelate from LL-2,6-diaminopimelate: step 1/1. Catalyzes the stereoinversion of LL-2,6-diaminopimelate (L,L-DAP) to meso-diaminopimelate (meso-DAP), a precursor of L-lysine and an essential component of the bacterial peptidoglycan. The polypeptide is Diaminopimelate epimerase (Neisseria meningitidis serogroup A / serotype 4A (strain DSM 15465 / Z2491)).